The following is a 651-amino-acid chain: Intraflagellar transport protein 70A (651 aa).

TPR repeat units follow at residues 8-41 (DGEY…QYRS), 42-75 (RAGL…TPEV), 140-173 (PESE…MGYK), 175-207 (DLSY…GIRE), 372-405 (LTEQ…YDET), 410-443 (IPVL…CNEH), and 445-478 (IWKL…HYDN). Residues 494-521 (YIMTSQNEEAEELMRKIEKEEEQIAYEN) are a coiled coil. The TPR 8 repeat unit spans residues 530–563 (CIVNLVIGTLYCAKGNYEFGISRVIKSLEPYNKK).

The protein belongs to the TTC30/dfy-1/fleer family.

Its subcellular location is the cell projection. The protein resides in the cilium. Required for polyglutamylation of axonemal tubulin. Plays a role in anterograde intraflagellar transport (IFT), the process by which cilia precursors are transported from the base of the cilium to the site of their incorporation at the tip. The chain is Intraflagellar transport protein 70A (ift70a) from Xenopus tropicalis (Western clawed frog).